Consider the following 265-residue polypeptide: Probable protein VP2 (265 aa).

Disordered regions lie at residues 44–110 (RLGR…DDLS), 152–171 (STRS…SDVA), and 194–265 (VQNA…CSSN). The span at 48–60 (PQPPRPPGGPPGP) shows a compositional bias: pro residues. The span at 152–168 (STRSTSTRASRSTDGTS) shows a compositional bias: low complexity. Positions 221–242 (GKTRPRKKPRAKQKPKKRRRYR) are enriched in basic residues. The segment covering 243 to 265 (SSSNSSSKSNDSSDAESSTCSSN) has biased composition (low complexity).

In terms of processing, phosphorylated at C-terminal serines.

The chain is Probable protein VP2 from Torque teno virus (isolate Human/Germany/KAV/2001) (TTV).